The following is a 397-amino-acid chain: Phosphoglycerate kinase (397 aa).

Substrate-binding positions include 26-28, R42, 65-68, R119, and R152; these read DLN and HLGR. ATP contacts are provided by residues K203, E325, and 351-354; that span reads GGDT.

It belongs to the phosphoglycerate kinase family. Monomer.

Its subcellular location is the cytoplasm. The enzyme catalyses (2R)-3-phosphoglycerate + ATP = (2R)-3-phospho-glyceroyl phosphate + ADP. Its pathway is carbohydrate degradation; glycolysis; pyruvate from D-glyceraldehyde 3-phosphate: step 2/5. The protein is Phosphoglycerate kinase of Bordetella pertussis (strain Tohama I / ATCC BAA-589 / NCTC 13251).